The sequence spans 83 residues: Pigment-dispersing hormone peptides (83 aa).

The signal sequence occupies residues 1–24 (MRFIILGVLFIAVASMILSNGVMA). An Alanine amide modification is found at Ala80.

This sequence belongs to the arthropod PDH family. As to expression, strongly expressed in eyestalk tissue and cerebral ganglia (at protein level).

It is found in the secreted. Functionally, the pigment-dispersing hormone causes the migration of the distal retinal pigment into the proximal end of the pigment chromatophore cells and thus decreases the amount of light entering the retinulas. May also function as a neurotransmitter and/or neuromodulator. The polypeptide is Pigment-dispersing hormone peptides (Eurydice pulchra (Speckled sea louse)).